We begin with the raw amino-acid sequence, 447 residues long: Serine/threonine-protein phosphatase 2A 55 kDa regulatory subunit B delta isoform (447 aa).

7 WD repeats span residues 26 to 65 (AEADIISTVEFNYSGELLATGDKGGRVVIFQREQESKNRP), 91 to 132 (EIEE…KRAE), 175 to 213 (AHTYHINSISVNSDYETYLSADDLRINLWHLEITDRSFN), 224 to 264 (ELTE…LCDR), 283 to 321 (EIISSISDVKFSHSGRYMMTRDYLSVKVWDLNMENRPVE), 338 to 379 (ENDC…DITL), and 414 to 447 (DFNKKILHTAWHPKENVIAVAATNNLYIFQDKMN).

The protein belongs to the phosphatase 2A regulatory subunit B family. PP2A consists of a common heterodimeric core enzyme, composed of a 36 kDa catalytic subunit (subunit C) and a 65 kDa constant regulatory subunit (PR65 or subunit A), that associates with a variety of regulatory subunits.

The protein localises to the cytoplasm. Its function is as follows. Substrate-recognition subunit of protein phosphatase 2A (PP2A) that plays a key role in cell cycle by controlling mitosis entry and exit. The activity of PP2A complexes containing PPP2R2D (PR55-delta) fluctuate during the cell cycle: the activity is high in interphase and low in mitosis. This Danio rerio (Zebrafish) protein is Serine/threonine-protein phosphatase 2A 55 kDa regulatory subunit B delta isoform (ppp2r2d).